A 331-amino-acid polypeptide reads, in one-letter code: DNA-directed RNA polymerase subunit alpha (331 aa).

The alpha N-terminal domain (alpha-NTD) stretch occupies residues 1 to 246; sequence MMQTSRTLHN…GLFSPLQEVS (246 aa). The segment at 256-331 is alpha C-terminal domain (alpha-CTD); sequence AEDNQKNQIP…LTLPRERSKT (76 aa).

Belongs to the RNA polymerase alpha chain family. In cyanobacteria the RNAP catalytic core is composed of 2 alpha, 1 beta, 1 beta', 1 gamma and 1 omega subunit. When a sigma factor is associated with the core the holoenzyme is formed, which can initiate transcription.

It carries out the reaction RNA(n) + a ribonucleoside 5'-triphosphate = RNA(n+1) + diphosphate. Functionally, DNA-dependent RNA polymerase catalyzes the transcription of DNA into RNA using the four ribonucleoside triphosphates as substrates. The protein is DNA-directed RNA polymerase subunit alpha of Synechococcus sp. (strain JA-3-3Ab) (Cyanobacteria bacterium Yellowstone A-Prime).